A 140-amino-acid chain; its full sequence is Nucleoside diphosphate kinase (140 aa).

Positions 9, 57, 85, 91, 102, and 112 each coordinate ATP. H115 serves as the catalytic Pros-phosphohistidine intermediate.

The protein belongs to the NDK family. Homotetramer. It depends on Mg(2+) as a cofactor.

Its subcellular location is the cytoplasm. It carries out the reaction a 2'-deoxyribonucleoside 5'-diphosphate + ATP = a 2'-deoxyribonucleoside 5'-triphosphate + ADP. The enzyme catalyses a ribonucleoside 5'-diphosphate + ATP = a ribonucleoside 5'-triphosphate + ADP. Functionally, major role in the synthesis of nucleoside triphosphates other than ATP. The ATP gamma phosphate is transferred to the NDP beta phosphate via a ping-pong mechanism, using a phosphorylated active-site intermediate. This is Nucleoside diphosphate kinase from Chlorobium luteolum (strain DSM 273 / BCRC 81028 / 2530) (Pelodictyon luteolum).